Here is a 162-residue protein sequence, read N- to C-terminus: uncharacterized protein (162 aa).

Positions 1–23 are cleaved as a signal peptide; it reads MLSLKSPAVLLSMVILVPLFALA.

This is an uncharacterized protein from Mycosarcoma maydis (Corn smut fungus).